A 448-amino-acid chain; its full sequence is N-succinylarginine dihydrolase (448 aa).

Substrate-binding positions include Gly-19–Ser-28, Asn-110, and His-137–Arg-138. The active site involves Glu-174. Position 214 (Arg-214) interacts with substrate. His-250 is a catalytic residue. 2 residues coordinate substrate: Asp-252 and Asn-365. The active-site Nucleophile is the Cys-371.

This sequence belongs to the succinylarginine dihydrolase family. In terms of assembly, homodimer.

It carries out the reaction N(2)-succinyl-L-arginine + 2 H2O + 2 H(+) = N(2)-succinyl-L-ornithine + 2 NH4(+) + CO2. It functions in the pathway amino-acid degradation; L-arginine degradation via AST pathway; L-glutamate and succinate from L-arginine: step 2/5. Catalyzes the hydrolysis of N(2)-succinylarginine into N(2)-succinylornithine, ammonia and CO(2). This chain is N-succinylarginine dihydrolase, found in Ectopseudomonas mendocina (strain ymp) (Pseudomonas mendocina).